We begin with the raw amino-acid sequence, 618 residues long: Putative UDP-glucuronate:xylan alpha-glucuronosyltransferase 3 (618 aa).

A helical; Signal-anchor for type II membrane protein membrane pass occupies residues 32–54 (GVKFNTLKLVLICIMLGALFTIY). D379 and D381 together coordinate Mn(2+). Residues 379–381 (DAD), 408–410 (NSG), 435–439 (NGGDQ), and 489–495 (HYLGYNK) each bind substrate. Residue H489 coordinates Mn(2+). Low complexity predominate over residues 598–608 (TNNSSTTTTSS). The segment at 598 to 618 (TNNSSTTTTSSPPHKTALPSL) is disordered.

It belongs to the glycosyltransferase 8 family. Glycogenin subfamily. It depends on Mn(2+) as a cofactor.

The protein localises to the golgi apparatus membrane. Functionally, may be involved in the substitutions of the xylan backbone in stem glucuronoxylan. The polypeptide is Putative UDP-glucuronate:xylan alpha-glucuronosyltransferase 3 (GUX3) (Arabidopsis thaliana (Mouse-ear cress)).